A 99-amino-acid chain; its full sequence is Protein AC150 (99 aa).

Residues 38 to 96 (GFSCYNKPIGVNFPHPTRCDAFYMCVGLNQKLELICPEGFEFDPDVKNCVPISDYGCTA) enclose the Chitin-binding type-2 domain. C73 and C86 are disulfide-bonded.

Its subcellular location is the host nucleus. It is found in the virion. Plays a role in primary oral infection of the host. The polypeptide is Protein AC150 (Autographa californica nuclear polyhedrosis virus (AcMNPV)).